The following is a 189-amino-acid chain: Prophage DNA-packing protein NohA (189 aa).

This sequence belongs to the terminase small subunit family.

This is Prophage DNA-packing protein NohA (nohA) from Escherichia coli (strain K12).